A 590-amino-acid polypeptide reads, in one-letter code: Pescadillo homolog (590 aa).

A BRCT domain is found at 332–422 (VCKSLFKDLK…IILPTEKYLV (91 aa)). The tract at residues 561 to 590 (AMKISQSRKRSGVEIIEQRKKRLNDTQPSS) is disordered.

The protein belongs to the pescadillo family. In terms of assembly, interacts with BOP1 and WDR12. Interacts with NSN1. In terms of tissue distribution, expressed in shoot and root apical meristems, epidermal cells and vasculature of developing leaves, trichome progenitor cells, young flowers, developing pollen grains and ovules, and mature pollen grains.

The protein resides in the nucleus. The protein localises to the nucleolus. Its subcellular location is the nucleoplasm. Its function is as follows. Required for maturation of ribosomal RNAs and formation of the large ribosomal subunit. Plays an essential role in cell growth and survival through its regulation of ribosome biogenesis and mitotic progression. Required for normal root cell growth and differentiation. This is Pescadillo homolog from Arabidopsis thaliana (Mouse-ear cress).